Here is a 377-residue protein sequence, read N- to C-terminus: Secreted LysM effector Lys2 (377 aa).

The signal sequence occupies residues 1-22; it reads MVRQSIGLIALQLLNLVSVAQA. Low complexity predominate over residues 104-119; sequence TSSSTATTTSQKPTAT. The segment at 104-124 is disordered; sequence TSSSTATTTSQKPTATVSPLP. LysM domains are found at residues 135-182 and 207-253; these read KYYN…YVCV and KYYK…YYCV.

This sequence belongs to the secreted LysM effector family.

In terms of biological role, might have a role in sequestration of chitin oligosaccharides (breakdown products of fungal cell walls that are released during invasion and act as triggers of host immunity) to dampen host defense. This chain is Secreted LysM effector Lys2, found in Pochonia chlamydosporia (strain 123) (Metacordyceps chlamydosporia).